The sequence spans 676 residues: DNA ligase (676 aa).

NAD(+) is bound by residues 34–38, 84–85, and Glu116; these read DAEYD and SL. Residue Lys118 is the N6-AMP-lysine intermediate of the active site. NAD(+)-binding residues include Arg139, Glu174, Lys294, and Lys318. Residues Cys412, Cys415, Cys428, and Cys433 each contribute to the Zn(2+) site. The BRCT domain maps to 589–676; that stretch reads KGGEALKGLT…RTGKKAEELV (88 aa).

It belongs to the NAD-dependent DNA ligase family. LigA subfamily. It depends on Mg(2+) as a cofactor. Requires Mn(2+) as cofactor.

The catalysed reaction is NAD(+) + (deoxyribonucleotide)n-3'-hydroxyl + 5'-phospho-(deoxyribonucleotide)m = (deoxyribonucleotide)n+m + AMP + beta-nicotinamide D-nucleotide.. Functionally, DNA ligase that catalyzes the formation of phosphodiester linkages between 5'-phosphoryl and 3'-hydroxyl groups in double-stranded DNA using NAD as a coenzyme and as the energy source for the reaction. It is essential for DNA replication and repair of damaged DNA. The polypeptide is DNA ligase (Thermus thermophilus (strain ATCC 27634 / DSM 579 / HB8)).